A 63-amino-acid chain; its full sequence is Keratin-associated protein 8-1 (63 aa).

The 12 X 2 AA repeats of G-[YCGS] stretch occupies residues 12–54 (PGCYWGSYGYPLGYSVGCGYGSTYSPVGYGFGYGYNGCGAFGY).

The protein belongs to the KRTAP type 8 family. As to quaternary structure, interacts with hair keratins. In terms of tissue distribution, is essentially restricted to only one vertical half of the hair forming compartment and in beard hairs is absent from the central medulla.

Its function is as follows. In the hair cortex, hair keratin intermediate filaments are embedded in an interfilamentous matrix, consisting of hair keratin-associated proteins (KRTAP), which are essential for the formation of a rigid and resistant hair shaft through their extensive disulfide bond cross-linking with abundant cysteine residues of hair keratins. The matrix proteins include the high-sulfur and high-glycine-tyrosine keratins. The polypeptide is Keratin-associated protein 8-1 (KRTAP8-1) (Homo sapiens (Human)).